We begin with the raw amino-acid sequence, 140 residues long: Large ribosomal subunit protein uL14 (140 aa).

This sequence belongs to the universal ribosomal protein uL14 family. In terms of assembly, component of the large ribosomal subunit.

Its subcellular location is the cytoplasm. Its function is as follows. Component of the large ribosomal subunit. The ribosome is a large ribonucleoprotein complex responsible for the synthesis of proteins in the cell. In Danio rerio (Zebrafish), this protein is Large ribosomal subunit protein uL14 (rpl23).